The sequence spans 549 residues: TBC1 domain family member 3G (549 aa).

The Rab-GAP TBC domain maps to 101 to 293 (GMPMNIRGPM…RLWDVYLVEG (193 aa)). S-palmitoyl cysteine attachment occurs at residues cysteine 318 and cysteine 325. 2 disordered regions span residues 350 to 443 (LTRK…QGGP) and 507 to 526 (AAPS…DEQQ). A compositionally biased stretch (low complexity) spans 398 to 417 (PRPIWSASPPRAPRSSTPCP).

Post-translationally, ubiquitinated by a CUL7-based E3 ligase, which leads to proteasomal degradation. Palmitoylation is required for membrane localization and protects TBC1D3 from ubiquitination.

It is found in the cell membrane. Functionally, acts as a GTPase activating protein for RAB5. Does not act on RAB4 or RAB11. In Homo sapiens (Human), this protein is TBC1 domain family member 3G (TBC1D3G).